The sequence spans 33 residues: Cytochrome b6-f complex subunit 8 (33 aa).

The chain crosses the membrane as a helical span at residues 2–22 (LISLGWAALAATFTFSIAMVV).

Belongs to the PetN family. In terms of assembly, the 4 large subunits of the cytochrome b6-f complex are cytochrome b6, subunit IV (17 kDa polypeptide, PetD), cytochrome f and the Rieske protein, while the 4 small subunits are PetG, PetL, PetM and PetN. The complex functions as a dimer.

It localises to the cellular thylakoid membrane. Component of the cytochrome b6-f complex, which mediates electron transfer between photosystem II (PSII) and photosystem I (PSI), cyclic electron flow around PSI, and state transitions. The polypeptide is Cytochrome b6-f complex subunit 8 (Synechococcus sp. (strain RCC307)).